The chain runs to 123 residues: Small ribosomal subunit protein uS12 (123 aa).

A disordered region spans residues 1-30 (MPTIQQLIRKPRQPKIKRSKSQHMEGCPQK). Over residues 9-21 (RKPRQPKIKRSKS) the composition is skewed to basic residues. A 3-methylthioaspartic acid modification is found at D89. The tract at residues 104–123 (TQGVKDRRQRRSKYGAKRPK) is disordered. A compositionally biased stretch (basic residues) spans 110–123 (RRQRRSKYGAKRPK).

It belongs to the universal ribosomal protein uS12 family. As to quaternary structure, part of the 30S ribosomal subunit. Contacts proteins S8 and S17. May interact with IF1 in the 30S initiation complex.

Its function is as follows. With S4 and S5 plays an important role in translational accuracy. In terms of biological role, interacts with and stabilizes bases of the 16S rRNA that are involved in tRNA selection in the A site and with the mRNA backbone. Located at the interface of the 30S and 50S subunits, it traverses the body of the 30S subunit contacting proteins on the other side and probably holding the rRNA structure together. The combined cluster of proteins S8, S12 and S17 appears to hold together the shoulder and platform of the 30S subunit. The chain is Small ribosomal subunit protein uS12 from Jannaschia sp. (strain CCS1).